A 192-amino-acid chain; its full sequence is Peptidyl-tRNA hydrolase (192 aa).

TRNA is bound at residue Y14. The active-site Proton acceptor is H19. TRNA-binding residues include Y64, N66, and N112.

Belongs to the PTH family. Monomer.

Its subcellular location is the cytoplasm. The enzyme catalyses an N-acyl-L-alpha-aminoacyl-tRNA + H2O = an N-acyl-L-amino acid + a tRNA + H(+). Functionally, hydrolyzes ribosome-free peptidyl-tRNAs (with 1 or more amino acids incorporated), which drop off the ribosome during protein synthesis, or as a result of ribosome stalling. Catalyzes the release of premature peptidyl moieties from peptidyl-tRNA molecules trapped in stalled 50S ribosomal subunits, and thus maintains levels of free tRNAs and 50S ribosomes. This chain is Peptidyl-tRNA hydrolase, found in Anaeromyxobacter sp. (strain K).